Reading from the N-terminus, the 416-residue chain is Serine hydroxymethyltransferase (416 aa).

Residues L117 and G121–L123 contribute to the (6S)-5,6,7,8-tetrahydrofolate site. Position 225 is an N6-(pyridoxal phosphate)lysine (K225). A (6S)-5,6,7,8-tetrahydrofolate-binding site is contributed by S351 to F353.

It belongs to the SHMT family. In terms of assembly, homodimer. Pyridoxal 5'-phosphate serves as cofactor.

The protein localises to the cytoplasm. The enzyme catalyses (6R)-5,10-methylene-5,6,7,8-tetrahydrofolate + glycine + H2O = (6S)-5,6,7,8-tetrahydrofolate + L-serine. It functions in the pathway one-carbon metabolism; tetrahydrofolate interconversion. The protein operates within amino-acid biosynthesis; glycine biosynthesis; glycine from L-serine: step 1/1. Catalyzes the reversible interconversion of serine and glycine with tetrahydrofolate (THF) serving as the one-carbon carrier. This reaction serves as the major source of one-carbon groups required for the biosynthesis of purines, thymidylate, methionine, and other important biomolecules. Also exhibits THF-independent aldolase activity toward beta-hydroxyamino acids, producing glycine and aldehydes, via a retro-aldol mechanism. This chain is Serine hydroxymethyltransferase, found in Blochmanniella pennsylvanica (strain BPEN).